Reading from the N-terminus, the 732-residue chain is Catalase-peroxidase (732 aa).

The first 15 residues, 1 to 15, serve as a signal peptide directing secretion; sequence MSTESKCPFAGGAYA. Positions 96–219 form a cross-link, tryptophyl-tyrosyl-methioninium (Trp-Tyr) (with M-245); sequence WHSAGTYRIY…LGAVQMGLIY (124 aa). The Proton acceptor role is filled by H97. Positions 219-245 form a cross-link, tryptophyl-tyrosyl-methioninium (Tyr-Met) (with W-96); it reads YVNPEGPNGNPDPLASARDIRETFARM. Residue H260 participates in heme b binding.

Belongs to the peroxidase family. Peroxidase/catalase subfamily. Homodimer or homotetramer. Requires heme b as cofactor. Post-translationally, formation of the three residue Trp-Tyr-Met cross-link is important for the catalase, but not the peroxidase activity of the enzyme.

It carries out the reaction H2O2 + AH2 = A + 2 H2O. It catalyses the reaction 2 H2O2 = O2 + 2 H2O. In terms of biological role, bifunctional enzyme with both catalase and broad-spectrum peroxidase activity. The sequence is that of Catalase-peroxidase from Acidobacterium capsulatum (strain ATCC 51196 / DSM 11244 / BCRC 80197 / JCM 7670 / NBRC 15755 / NCIMB 13165 / 161).